Here is a 446-residue protein sequence, read N- to C-terminus: ATP-dependent protease ATPase subunit HslU (446 aa).

ATP contacts are provided by residues valine 17, 59-64, aspartate 255, glutamate 320, and arginine 392; that span reads GVGKTE.

The protein belongs to the ClpX chaperone family. HslU subfamily. A double ring-shaped homohexamer of HslV is capped on each side by a ring-shaped HslU homohexamer. The assembly of the HslU/HslV complex is dependent on binding of ATP.

The protein localises to the cytoplasm. Its function is as follows. ATPase subunit of a proteasome-like degradation complex; this subunit has chaperone activity. The binding of ATP and its subsequent hydrolysis by HslU are essential for unfolding of protein substrates subsequently hydrolyzed by HslV. HslU recognizes the N-terminal part of its protein substrates and unfolds these before they are guided to HslV for hydrolysis. The polypeptide is ATP-dependent protease ATPase subunit HslU (Azotobacter vinelandii (strain DJ / ATCC BAA-1303)).